A 396-amino-acid polypeptide reads, in one-letter code: Elongation factor Tu (396 aa).

One can recognise a tr-type G domain in the interval 10-206 (KPHVNIGTIG…AVDAYIPEPE (197 aa)). Residues 19 to 26 (GHVDHGKT) form a G1 region. A GTP-binding site is contributed by 19–26 (GHVDHGKT). Position 26 (threonine 26) interacts with Mg(2+). The G2 stretch occupies residues 60 to 64 (GITIS). The tract at residues 81-84 (DCPG) is G3. Residues 81-85 (DCPGH) and 136-139 (NKVD) each bind GTP. Residues 136–139 (NKVD) form a G4 region. A G5 region spans residues 174–176 (SAL).

It belongs to the TRAFAC class translation factor GTPase superfamily. Classic translation factor GTPase family. EF-Tu/EF-1A subfamily. In terms of assembly, monomer.

The protein localises to the cytoplasm. It catalyses the reaction GTP + H2O = GDP + phosphate + H(+). Functionally, GTP hydrolase that promotes the GTP-dependent binding of aminoacyl-tRNA to the A-site of ribosomes during protein biosynthesis. The sequence is that of Elongation factor Tu from Magnetococcus marinus (strain ATCC BAA-1437 / JCM 17883 / MC-1).